The following is a 152-amino-acid chain: Protein-export protein SecB (152 aa).

Belongs to the SecB family. In terms of assembly, homotetramer, a dimer of dimers. One homotetramer interacts with 1 SecA dimer.

It localises to the cytoplasm. Functionally, one of the proteins required for the normal export of preproteins out of the cell cytoplasm. It is a molecular chaperone that binds to a subset of precursor proteins, maintaining them in a translocation-competent state. It also specifically binds to its receptor SecA. The sequence is that of Protein-export protein SecB from Rickettsia rickettsii (strain Iowa).